A 288-amino-acid polypeptide reads, in one-letter code: Mortality factor 4-like protein 2 (288 aa).

Positions 1 to 15 (MSSRKQGSQPRGQQS) are enriched in polar residues. The interval 1–113 (MSSRKQGSQP…RADPTVESEE (113 aa)) is disordered. A Phosphoserine modification is found at serine 71. The 172-residue stretch at 117–288 (NRMEVKVKIP…ASAEYHRKAL (172 aa)) folds into the MRG domain.

As to quaternary structure, component of the NuA4 histone acetyltransferase complex which contains the catalytic subunit KAT5/TIP60 and the subunits EP400, TRRAP/PAF400, BRD8/SMAP, EPC1, DMAP1/DNMAP1, RUVBL1/TIP49, RUVBL2, ING3, actin, ACTL6A/BAF53A, MORF4L1/MRG15, MORF4L2/MRGX, MRGBP, YEATS4/GAS41 and VPS72/YL1. The NuA4 complex interacts with MYC and the adenovirus E1A protein. MORF4L1 may also participate in the formation of NuA4 related complexes which lack the KAT5/TIP60 catalytic subunit, but which include the SWI/SNF related protein SRCAP. Component of the MSIN3A histone deacetylase complex, which includes SIN3A, HDAC2, ARID4B, MORF4L1, RBBP4/RbAp48, and RBBP7/RbAp46. Interacts with MRFAP1 and RB1. May also interact with one or more as yet undefined members of the TLE (transducin-like enhancer of split) family of transcriptional repressors.

The protein resides in the nucleus. In terms of biological role, component of the NuA4 histone acetyltransferase complex which is involved in transcriptional activation of select genes principally by acetylation of nucleosomal histone H4 and H2A. This modification may both alter nucleosome - DNA interactions and promote interaction of the modified histones with other proteins which positively regulate transcription. This complex may be required for the activation of transcriptional programs associated with oncogene and proto-oncogene mediated growth induction, tumor suppressor mediated growth arrest and replicative senescence, apoptosis, and DNA repair. The NuA4 complex ATPase and helicase activities seem to be, at least in part, contributed by the association of RUVBL1 and RUVBL2 with EP400. NuA4 may also play a direct role in DNA repair when directly recruited to sites of DNA damage. Also a component of the MSIN3A complex which acts to repress transcription by deacetylation of nucleosomal histones. The sequence is that of Mortality factor 4-like protein 2 (MORF4L2) from Macaca fascicularis (Crab-eating macaque).